We begin with the raw amino-acid sequence, 422 residues long: Glycerol-3-phosphate dehydrogenase [NAD(+)] 2 (422 aa).

Residues 69-74, phenylalanine 157, lysine 180, and alanine 213 contribute to the NAD(+) site; that span reads GSGNWG. Residue lysine 180 coordinates substrate. The Proton acceptor role is filled by lysine 273. The NAD(+) site is built by arginine 338 and glutamine 367. Residue 338–339 participates in substrate binding; that stretch reads RN.

This sequence belongs to the NAD-dependent glycerol-3-phosphate dehydrogenase family.

It carries out the reaction sn-glycerol 3-phosphate + NAD(+) = dihydroxyacetone phosphate + NADH + H(+). The protein is Glycerol-3-phosphate dehydrogenase [NAD(+)] 2 (GPD2) of Candida glabrata (strain ATCC 2001 / BCRC 20586 / JCM 3761 / NBRC 0622 / NRRL Y-65 / CBS 138) (Yeast).